We begin with the raw amino-acid sequence, 231 residues long: Protoporphyrinogen IX dehydrogenase [quinone] (231 aa).

The Flavodoxin-like domain maps to 8–178; sequence CLMLYSTTDG…AVRRFASDFA (171 aa). Residues 14 to 18 and 90 to 158 contribute to the FMN site; these read TTDGH and FFSV…ETDS. Residues 208 to 228 traverse the membrane as a helical segment; the sequence is CLLAIVGMSAAVIVGIRIIAA.

This sequence belongs to the HemG family. It depends on FMN as a cofactor.

Its subcellular location is the membrane. It carries out the reaction protoporphyrinogen IX + 3 a menaquinone = protoporphyrin IX + 3 a menaquinol. The enzyme catalyses protoporphyrinogen IX + 3 a ubiquinone = protoporphyrin IX + 3 a ubiquinol. It catalyses the reaction protoporphyrinogen IX + 3 a quinone = protoporphyrin IX + 3 a quinol. The protein operates within porphyrin-containing compound metabolism; protoporphyrin-IX biosynthesis; protoporphyrin-IX from protoporphyrinogen-IX: step 1/1. In E.coli extracts under anerobic conditions catalyzes the 6-electron oxidation of protoporphyrinogen IX to form protoporphyrin IX, transferring electrons to fumarate reductase, presumably via menaquinone. In vitro under aerobic conditions forms protoporphyrin IX using ubiquinone as an electron acceptor. Complements an E.coli hemG deletion, allowing normal growth in vivo. The polypeptide is Protoporphyrinogen IX dehydrogenase [quinone] (Leishmania major).